A 100-amino-acid chain; its full sequence is Small ribosomal subunit protein uS14c (100 aa).

Belongs to the universal ribosomal protein uS14 family. In terms of assembly, part of the 30S ribosomal subunit.

The protein resides in the plastid. Its subcellular location is the chloroplast. Functionally, binds 16S rRNA, required for the assembly of 30S particles. The protein is Small ribosomal subunit protein uS14c of Lobularia maritima (Sweet alyssum).